We begin with the raw amino-acid sequence, 457 residues long: PDZ and LIM domain protein 7 (457 aa).

One can recognise a PDZ domain in the interval 1–85 (MDSFKVVLEG…RLSLGLSRAQ (85 aa)). S78 bears the Phosphoserine mark. Disordered stretches follow at residues 82-166 (SRAQ…QSRS) and 186-226 (FMKK…PWAV). At T96 the chain carries Phosphothreonine. An Asymmetric dimethylarginine modification is found at R103. S111 carries the post-translational modification Phosphoserine. Residues 126–135 (DSTLRQNGQL) are compositionally biased toward polar residues. A compositionally biased stretch (basic and acidic residues) spans 144–157 (SKQRLMEDTEDWRP). S247 bears the Phosphoserine mark. LIM zinc-binding domains are found at residues 280-338 (PVCH…VRYA), 339-398 (PNCA…MFGT), and 399-457 (KCRG…FSHV).

Specifically binds via its LIM zinc-binding 3 domain (LIM 3) domain to endocytic codes of INSR, but not with those of IGF1R, LDLR, TFRC, or EGFR. Interacts with various PKC isoforms through the LIM zinc-binding domains. Binds to RET in a phosphorylation-independent manner via its LIM zinc-binding domain 2 (LIM 2). Probably part of a complex with SHC and the RET dimer. Interacts with TPM2, TBX4 and TBX5.

Its subcellular location is the cytoplasm. It localises to the cytoskeleton. In terms of biological role, may function as a scaffold on which the coordinated assembly of proteins can occur. May play a role as an adapter that, via its PDZ domain, localizes LIM-binding proteins to actin filaments of both skeletal muscle and nonmuscle tissues. Involved in both of the two fundamental mechanisms of bone formation, direct bone formation (e.g. embryonic flat bones mandible and cranium), and endochondral bone formation (e.g. embryonic long bone development). Plays a role during fracture repair. Involved in BMP6 signaling pathway. In Mus musculus (Mouse), this protein is PDZ and LIM domain protein 7 (Pdlim7).